Reading from the N-terminus, the 369-residue chain is MTAIEKFFTEKSPDSEQVLLKVIELGIDFLGGEWKNVDKSQVNVSRVHGGQSNHMFHVTSSTSATPYLLRIHRQPPSQVFTDTVNLAIFSERGLGPKLYGFFEGGRMEEFLPSKTFDVNDVLVPENSRKIGAIFPLYHSINVPVSKSRRCVHLMREWLNGYESLGGGDYEILPTTVNYSDHPKSVSIKDLNHEIDNFEKWSTEIFEHTLVFSHNDLASTNILELNSTKELVLIDWEFGTYNWRGFDLAMHLSETAIDYRVPFPPGIKMNGDLIDNPPNIQIFCEAYVEADKKLKNRSPSDPTAEVKALIQECQFFWPLTNLFWALSAMKHSLLKFENGVDLDVQARDRLAVYFHLKPRSQKIYEELSKK.

Belongs to the choline/ethanolamine kinase family. Mg(2+) serves as cofactor.

The enzyme catalyses choline + ATP = phosphocholine + ADP + H(+). The protein operates within phospholipid metabolism; phosphatidylcholine biosynthesis; phosphocholine from choline: step 1/1. Functionally, catalyzes the first step in phosphatidylcholine biosynthesis. Phosphorylates choline. The chain is Choline kinase B2 (ckb-2) from Caenorhabditis elegans.